Reading from the N-terminus, the 482-residue chain is Probable F-box protein At1g30780 (482 aa).

The F-box domain occupies 230–280 (EIDLDSLPFDLKMVILTRLSAKSLTNFKRVSKMWSSIIGSQRFIDSFFTMS).

This is Probable F-box protein At1g30780 from Arabidopsis thaliana (Mouse-ear cress).